Consider the following 439-residue polypeptide: MQVKENKQLCLISLGCSKNLVDSEVMLGKLYNYTLTNDAKSADVILINTCGFIESAKQESIQTILNAAKDKKEGAILIASGCLSERYKDEIKELIPEVDIFTGVGDYDKIDIMIAKKQNQFSEQVFLSEHYNARIITGSSVHAYVKISEGCNQKCSFCAIPSFKGKLQSRELDSILKEVENLALKGYTDMTFIAQDSSSFLYDKGQKDGLIQLIRAIDKQQALKSARILYLYPSSTTLELIGAIESSPIFQNYFDMPIQHISDSMLKKMRRNSSQAHHLKLLDAMKQVKESFIRSTIIVGHPEENESEFEELSAFLDEFQFDRLNIFAFSAEENTHAYSLEKVPKKTINARIKALNKIALKHQNHSFKALLNKPIKALVENKEGEYFYKARDLRWAPEVDGEILINDSELTTPLKPGHYTIAPSEFKDNILLAKVLSPF.

The MTTase N-terminal domain occupies 7–119 (KQLCLISLGC…IDIMIAKKQN (113 aa)). Cys16, Cys50, Cys82, Cys151, Cys155, and Cys158 together coordinate [4Fe-4S] cluster. Residues 137 to 368 (TGSSVHAYVK…ALKHQNHSFK (232 aa)) form the Radical SAM core domain.

Belongs to the methylthiotransferase family. RimO subfamily. Requires [4Fe-4S] cluster as cofactor.

It is found in the cytoplasm. It catalyses the reaction L-aspartate(89)-[ribosomal protein uS12]-hydrogen + (sulfur carrier)-SH + AH2 + 2 S-adenosyl-L-methionine = 3-methylsulfanyl-L-aspartate(89)-[ribosomal protein uS12]-hydrogen + (sulfur carrier)-H + 5'-deoxyadenosine + L-methionine + A + S-adenosyl-L-homocysteine + 2 H(+). Its function is as follows. Catalyzes the methylthiolation of an aspartic acid residue of ribosomal protein uS12. This is Ribosomal protein uS12 methylthiotransferase RimO from Helicobacter pylori (strain ATCC 700392 / 26695) (Campylobacter pylori).